The chain runs to 233 residues: Membrane steroid-binding protein 2 (233 aa).

A helical membrane pass occupies residues 23–43 (AFFTVLALAFAVYQVVSGFFV). Residues 70 to 167 (EITEEELKLY…SKYVKVGTIQ (98 aa)) enclose the Cytochrome b5 heme-binding domain. The tract at residues 70-167 (EITEEELKLY…SKYVKVGTIQ (98 aa)) is steroid-binding. 2 stretches are compositionally biased toward basic and acidic residues: residues 169 to 181 (KDGE…EPSE) and 202 to 224 (THDE…KDVA). Residues 169 to 233 (KDGEGKESSE…ATDDDDAAKE (65 aa)) are disordered. At Thr225 the chain carries Phosphothreonine.

It belongs to the cytochrome b5 family. MAPR subfamily.

It is found in the cell membrane. The chain is Membrane steroid-binding protein 2 (MSBP2) from Arabidopsis thaliana (Mouse-ear cress).